The primary structure comprises 567 residues: MEKIVLLLAIVSLVKSDQICIGYHANNSTEQVDTIMEKNVTVTHAQDILEKTHNGKLSDLDGVKPLILRDCSVAGWLLGNPMCDEFINVPEWSYIVEKANPANDLCYPGDFNDYEELKHLLSRINHFEKIQIIPKSSWSNHEASSGVSSACPYNGKSSFFRNVVWLIKKDSAYPTIKRSYNNTNQEDLLILWGIHHPNDAAEQTKLYQNPTTYISVGTSTLNQRLVPKIATRSKVNGQSGRMEFFWTILKPNDAINFESNGNFIAPEYAYKIVKKGDSAIMKSELEYGNCNTKCQTPMGAINSSMPFHNIHPLTIGECPKYVKSNRLVLATGLRNTPQRERRRKKRGLFGAIAGFIEGGWQGMVDGWYGYHHSNEQGSGYAADKESTQKAIDGVTNKVNSIINKMNTQFEAVGREFNNLERRIENLNKKMEDGFLDVWTYNAELLVLMENERTLDFHDSNVKNLYDKVRLQLRDNAKELGNGCFEFYHKCDNECMESVKNGTYDYPQYSEEARLNREEISGVKLESMGTYQILSIYSTVASSLALAIMVAGLSLWMCSNGSLQCRIC.

An N-terminal signal peptide occupies residues 1-16 (MEKIVLLLAIVSLVKS). Residues 17–531 (DQICIGYHAN…VKLESMGTYQ (515 aa)) lie on the Extracellular side of the membrane. Cystine bridges form between cysteine 20–cysteine 483, cysteine 71–cysteine 83, cysteine 106–cysteine 151, cysteine 294–cysteine 318, and cysteine 490–cysteine 494. Asparagine 26, asparagine 27, and asparagine 39 each carry an N-linked (GlcNAc...) asparagine; by host glycan. N-linked (GlcNAc...) asparagine; by host glycans are attached at residues asparagine 181 and asparagine 302. An N-linked (GlcNAc...) asparagine; by host glycan is attached at asparagine 500. The chain crosses the membrane as a helical span at residues 532-552 (ILSIYSTVASSLALAIMVAGL). Residues 553–567 (SLWMCSNGSLQCRIC) lie on the Cytoplasmic side of the membrane. S-palmitoyl cysteine; by host attachment occurs at residues cysteine 557, cysteine 564, and cysteine 567.

Belongs to the influenza viruses hemagglutinin family. As to quaternary structure, homotrimer of disulfide-linked HA1-HA2. In terms of processing, palmitoylated. In natural infection, inactive HA is matured into HA1 and HA2 outside the cell by one or more trypsin-like, arginine-specific endoprotease secreted by the bronchial epithelial cells. One identified protease that may be involved in this process is secreted in lungs by club cells.

The protein localises to the virion membrane. The protein resides in the host apical cell membrane. Its function is as follows. Binds to sialic acid-containing receptors on the cell surface, bringing about the attachment of the virus particle to the cell. This attachment induces virion internalization either through clathrin-dependent endocytosis or through clathrin- and caveolin-independent pathway. Plays a major role in the determination of host range restriction and virulence. Class I viral fusion protein. Responsible for penetration of the virus into the cell cytoplasm by mediating the fusion of the membrane of the endocytosed virus particle with the endosomal membrane. Low pH in endosomes induces an irreversible conformational change in HA2, releasing the fusion hydrophobic peptide. Several trimers are required to form a competent fusion pore. This Influenza A virus (strain A/Chicken/Hong Kong/31.2/2002 H5N1 genotype X1) protein is Hemagglutinin.